The primary structure comprises 590 residues: UvrABC system protein C (590 aa).

In terms of domain architecture, GIY-YIG spans 14 to 91 (DQPGCYLMKD…IKKHDPKYNV (78 aa)). Residues 196-231 (NEVKKELEEKMHEAAENLEFERAKELRDQIAHIEST) enclose the UVR domain.

It belongs to the UvrC family. In terms of assembly, interacts with UvrB in an incision complex.

It localises to the cytoplasm. The UvrABC repair system catalyzes the recognition and processing of DNA lesions. UvrC both incises the 5' and 3' sides of the lesion. The N-terminal half is responsible for the 3' incision and the C-terminal half is responsible for the 5' incision. The polypeptide is UvrABC system protein C (Bacillus subtilis (strain 168)).